The chain runs to 432 residues: Transcriptional adapter 3 (432 aa).

A Glycyl lysine isopeptide (Lys-Gly) (interchain with G-Cter in SUMO2) cross-link involves residue Lys-21. Residues 40-69 (IEELDTLQLELETLLSSASRRLRVLEAETQ) adopt a coiled-coil conformation. Positions 87–126 (GRDHELGAPPKHGKPKKQKLEGKAGHGPGPGPGRPKSKNL) are disordered. Lys-129 participates in a covalent cross-link: Glycyl lysine isopeptide (Lys-Gly) (interchain with G-Cter in SUMO2). Residues 272 to 319 (NIISPMEDSPIPDMSGKESGADGASTSPRNQNKPFSVPHTKSLESRIK) are disordered. A phosphoserine mark is found at Ser-280 and Ser-298. Over residues 295-305 (ASTSPRNQNKP) the composition is skewed to polar residues. The stretch at 367 to 407 (LLRLAKEEVSRQELRQRVRMADNEVMDAFRKIMAARQKKRT) forms a coiled coil. Lys-418 is subject to N6-acetyllysine.

Belongs to the NGG1 family. The PCAF complex is composed of a number of TBP-associated factors (TAFS), such as TAF5, TAF5L, TAF6, TAF6L, TAF9, TAF10 and TAF12, PCAF, and also PCAF-associated factors (PAFs), such as TADA2L/ADA2, TADA3L/ADA3 and SPT3. Interacts directly with TADA2L and PCAF and also with the high-risk HPV oncoprotein E6. Component of the STAGA transcription coactivator-HAT complex, at least composed of SUPT3H, GCN5L2, TAF5L, TAF6L, SUPT7L, TADA3L, TAD1L, TAF10, TAF12, TRRAP and TAF9. Component of the TFTC-HAT complex. Component of the ADA2A-containing complex (ATAC), composed of KAT14, KAT2A, TADA2L, TADA3L, ZZ3, MBIP, WDR5, YEATS2, CCDC101 and DR1. Ubiquitously expressed.

The protein localises to the nucleus. Functions as a component of the PCAF complex. The PCAF complex is capable of efficiently acetylating histones in a nucleosomal context. The PCAF complex could be considered as the human version of the yeast SAGA complex. Also known as a coactivator for p53/TP53-dependent transcriptional activation. Component of the ATAC complex, a complex with histone acetyltransferase activity on histones H3 and H4. The protein is Transcriptional adapter 3 (TADA3) of Homo sapiens (Human).